The following is a 180-amino-acid chain: Large ribosomal subunit protein uL5 (180 aa).

The protein belongs to the universal ribosomal protein uL5 family. As to quaternary structure, part of the 50S ribosomal subunit; part of the 5S rRNA/L5/L18/L25 subcomplex. Contacts the 5S rRNA and the P site tRNA. Forms a bridge to the 30S subunit in the 70S ribosome.

Its function is as follows. This is one of the proteins that bind and probably mediate the attachment of the 5S RNA into the large ribosomal subunit, where it forms part of the central protuberance. In the 70S ribosome it contacts protein S13 of the 30S subunit (bridge B1b), connecting the 2 subunits; this bridge is implicated in subunit movement. Contacts the P site tRNA; the 5S rRNA and some of its associated proteins might help stabilize positioning of ribosome-bound tRNAs. This chain is Large ribosomal subunit protein uL5, found in Polynucleobacter necessarius subsp. necessarius (strain STIR1).